The chain runs to 1074 residues: Chitin synthase 2 (1074 aa).

Disordered regions lie at residues Met-1–Gly-32, Gln-56–His-179, and Arg-209–Asn-255. Over residues Asp-19–Ala-29 the composition is skewed to polar residues. A compositionally biased stretch (low complexity) spans Arg-68 to Ser-80. Residues Asn-72 and Asn-97 are each glycosylated (N-linked (GlcNAc...) asparagine). Residues Ala-85–Ala-119 are compositionally biased toward polar residues. Residues Ser-129 to Pro-143 are compositionally biased toward low complexity. The N-linked (GlcNAc...) asparagine glycan is linked to Asn-149. The N-linked (GlcNAc...) asparagine glycan is linked to Asn-289. Helical transmembrane passes span Val-608 to Leu-628, Leu-742 to Leu-762, Gly-779 to Val-799, Ile-817 to Leu-837, Ile-867 to Glu-887, Met-891 to Met-911, Leu-1001 to Trp-1021, and Ile-1048 to Leu-1068.

This sequence belongs to the chitin synthase family. Class II subfamily.

It localises to the cell membrane. Its subcellular location is the cytoplasmic vesicle membrane. The enzyme catalyses [(1-&gt;4)-N-acetyl-beta-D-glucosaminyl](n) + UDP-N-acetyl-alpha-D-glucosamine = [(1-&gt;4)-N-acetyl-beta-D-glucosaminyl](n+1) + UDP + H(+). Its function is as follows. Polymerizes chitin, a structural polymer of the cell wall and septum, by transferring the sugar moiety of UDP-GlcNAc to the non-reducing end of the growing chitin polymer. The chain is Chitin synthase 2 (CHS2) from Mycosarcoma maydis (Corn smut fungus).